Here is a 242-residue protein sequence, read N- to C-terminus: NAD(P)H-quinone oxidoreductase subunit K (242 aa).

The [4Fe-4S] cluster site is built by C59, C60, C124, and C155.

This sequence belongs to the complex I 20 kDa subunit family. In terms of assembly, NDH-1 can be composed of about 15 different subunits; different subcomplexes with different compositions have been identified which probably have different functions. [4Fe-4S] cluster is required as a cofactor.

Its subcellular location is the cellular thylakoid membrane. The enzyme catalyses a plastoquinone + NADH + (n+1) H(+)(in) = a plastoquinol + NAD(+) + n H(+)(out). It catalyses the reaction a plastoquinone + NADPH + (n+1) H(+)(in) = a plastoquinol + NADP(+) + n H(+)(out). Its function is as follows. NDH-1 shuttles electrons from an unknown electron donor, via FMN and iron-sulfur (Fe-S) centers, to quinones in the respiratory and/or the photosynthetic chain. The immediate electron acceptor for the enzyme in this species is believed to be plastoquinone. Couples the redox reaction to proton translocation, and thus conserves the redox energy in a proton gradient. Cyanobacterial NDH-1 also plays a role in inorganic carbon-concentration. This chain is NAD(P)H-quinone oxidoreductase subunit K, found in Synechococcus sp. (strain RCC307).